The following is a 532-amino-acid chain: UDP-N-acetylmuramoylalanine--D-glutamate ligase (532 aa).

Residue Gly124 to Ser130 coordinates ATP.

Belongs to the MurCDEF family.

The protein localises to the cytoplasm. The catalysed reaction is UDP-N-acetyl-alpha-D-muramoyl-L-alanine + D-glutamate + ATP = UDP-N-acetyl-alpha-D-muramoyl-L-alanyl-D-glutamate + ADP + phosphate + H(+). It participates in cell wall biogenesis; peptidoglycan biosynthesis. Cell wall formation. Catalyzes the addition of glutamate to the nucleotide precursor UDP-N-acetylmuramoyl-L-alanine (UMA). In Treponema pallidum (strain Nichols), this protein is UDP-N-acetylmuramoylalanine--D-glutamate ligase (murD).